A 320-amino-acid polypeptide reads, in one-letter code: Glucokinase (320 aa).

It belongs to the ROK (NagC/XylR) family. Monomer. Requires a divalent metal cation as cofactor.

The catalysed reaction is D-glucose + ATP = D-glucose 6-phosphate + ADP + H(+). Functionally, catalyzes the phosphorylation of D-glucose to D-glucose 6-phosphate using ATP as the phosphate donor. ITP can also serve as an effective phosphoryl donor. According to Hansen et al., the enzyme has a broad hexose specificity, and in addition to glucose, which shows the highest catalytic efficiency, it can also phosphorylate fructose, mannose, glucosamine, N-acetylglucosamine, N-acetylmannosamine and 2-deoxyglucose. However, according to Sakuraba et al., the enzyme shows strict specificity for D-glucose. The chain is Glucokinase from Aeropyrum pernix (strain ATCC 700893 / DSM 11879 / JCM 9820 / NBRC 100138 / K1).